The following is a 188-amino-acid chain: UPF0397 protein LACR_0367 (188 aa).

Helical transmembrane passes span 14 to 34 (IVVA…LINI), 48 to 68 (AVLA…IGFI), 80 to 100 (APWW…GFGV), 120 to 140 (IVQF…GDIL), and 152 to 172 (QGVV…TLLL).

This sequence belongs to the UPF0397 family.

Its subcellular location is the cell membrane. The polypeptide is UPF0397 protein LACR_0367 (Lactococcus lactis subsp. cremoris (strain SK11)).